The sequence spans 123 residues: Ribonuclease P protein component 2 (123 aa).

Belongs to the eukaryotic/archaeal RNase P protein component 2 family. As to quaternary structure, consists of a catalytic RNA component and at least 4 protein subunits.

The enzyme catalyses Endonucleolytic cleavage of RNA, removing 5'-extranucleotides from tRNA precursor.. Part of ribonuclease P, a protein complex that generates mature tRNA molecules by cleaving their 5'-ends. This chain is Ribonuclease P protein component 2, found in Aeropyrum pernix (strain ATCC 700893 / DSM 11879 / JCM 9820 / NBRC 100138 / K1).